Here is a 141-residue protein sequence, read N- to C-terminus: Ribosome-binding factor A (141 aa).

Residues S120–L141 form a disordered region. A compositionally biased stretch (acidic residues) spans E129 to L141.

The protein belongs to the RbfA family. Monomer. Binds 30S ribosomal subunits, but not 50S ribosomal subunits or 70S ribosomes.

It is found in the cytoplasm. Functionally, one of several proteins that assist in the late maturation steps of the functional core of the 30S ribosomal subunit. Associates with free 30S ribosomal subunits (but not with 30S subunits that are part of 70S ribosomes or polysomes). Required for efficient processing of 16S rRNA. May interact with the 5'-terminal helix region of 16S rRNA. This is Ribosome-binding factor A from Zymomonas mobilis subsp. mobilis (strain ATCC 31821 / ZM4 / CP4).